The chain runs to 309 residues: tRNA pseudouridine synthase B (309 aa).

The Nucleophile role is filled by D51.

The protein belongs to the pseudouridine synthase TruB family. Type 1 subfamily.

It carries out the reaction uridine(55) in tRNA = pseudouridine(55) in tRNA. Its function is as follows. Responsible for synthesis of pseudouridine from uracil-55 in the psi GC loop of transfer RNAs. This chain is tRNA pseudouridine synthase B, found in Coxiella burnetii (strain RSA 493 / Nine Mile phase I).